Reading from the N-terminus, the 313-residue chain is Glyoxylate/hydroxypyruvate reductase A (313 aa).

Residue R228 is part of the active site. H276 (proton donor) is an active-site residue.

It belongs to the D-isomer specific 2-hydroxyacid dehydrogenase family. GhrA subfamily.

The protein localises to the cytoplasm. It catalyses the reaction glycolate + NADP(+) = glyoxylate + NADPH + H(+). It carries out the reaction (R)-glycerate + NAD(+) = 3-hydroxypyruvate + NADH + H(+). The enzyme catalyses (R)-glycerate + NADP(+) = 3-hydroxypyruvate + NADPH + H(+). Catalyzes the NADPH-dependent reduction of glyoxylate and hydroxypyruvate into glycolate and glycerate, respectively. This Photorhabdus laumondii subsp. laumondii (strain DSM 15139 / CIP 105565 / TT01) (Photorhabdus luminescens subsp. laumondii) protein is Glyoxylate/hydroxypyruvate reductase A.